The primary structure comprises 186 residues: Alkyl hydroperoxide reductase AhpD (186 aa).

Cysteine 132 (proton donor) is an active-site residue. Cysteines 132 and 135 form a disulfide. Catalysis depends on cysteine 135, which acts as the Cysteine sulfenic acid (-SOH) intermediate.

Belongs to the AhpD family.

It catalyses the reaction N(6)-[(R)-dihydrolipoyl]-L-lysyl-[lipoyl-carrier protein] + a hydroperoxide = N(6)-[(R)-lipoyl]-L-lysyl-[lipoyl-carrier protein] + an alcohol + H2O. Its function is as follows. Antioxidant protein with alkyl hydroperoxidase activity. Required for the reduction of the AhpC active site cysteine residues and for the regeneration of the AhpC enzyme activity. The protein is Alkyl hydroperoxide reductase AhpD of Anaeromyxobacter dehalogenans (strain 2CP-1 / ATCC BAA-258).